We begin with the raw amino-acid sequence, 222 residues long: Non-structural protein V (222 aa).

The tract at residues 61-107 is disordered; the sequence is ESTNHQKGSVGGGAKPKKPRPKIAIVPADDKTVPGKPIPNPLLGLDS. Zn(2+) is bound by residues His171, Cys190, Cys194, Cys206, Cys208, Cys211, Cys215, and Cys218.

Belongs to the paramyxoviruses V protein family. Interacts with host DDB1, STAT2 and IFIH1/MDA5. Interacts with host RIGI regulatory protein (via CARDs domain) and host TRIM25 (via SPRY domain); these interactions prevent TRIM25-mediated ubiquitination of RIG-I and disrupts downstream RIG-I signaling.

It localises to the host cytoplasm. Its function is as follows. Plays an essential role in the inhibition of host immune response. Prevents the establishment of cellular antiviral state by blocking interferon-alpha/beta (IFN-alpha/beta) production and signaling pathway. Interacts with host IFIH1/MDA5 and DHX58/LGP2 to inhibit the transduction pathway involved in the activation of IFN-beta promoter, thus protecting the virus against cell antiviral state. Efficiently blocks type I IFN signaling following infection by behaving as a substrate receptor for CUL4-DDB1 E3 ligase complex and targeting host STAT1 for proteasomal degradation. Blocks the type I interferon signaling pathway by disrupting the RIG-I signaling pathway. This is Non-structural protein V (P/V) from Parainfluenza virus 5 (strain W3) (PIV5).